A 58-amino-acid chain; its full sequence is Small ribosomal subunit protein bS21 (58 aa).

Belongs to the bacterial ribosomal protein bS21 family.

This Lactobacillus acidophilus (strain ATCC 700396 / NCK56 / N2 / NCFM) protein is Small ribosomal subunit protein bS21.